A 323-amino-acid polypeptide reads, in one-letter code: Annexin A3 (323 aa).

Residue alanine 2 is modified to N-acetylalanine. Annexin repeat units follow at residues 18–89 (FNPS…ALVT), 90–161 (PPAV…ILAN), 173–245 (QLAR…AIVR), and 249–320 (NTPA…KICG). Lysine 177 bears the N6-acetyllysine mark. At threonine 267 the chain carries Phosphothreonine.

The protein belongs to the annexin family.

Functionally, inhibitor of phospholipase A2, also possesses anti-coagulant properties. Also cleaves the cyclic bond of inositol 1,2-cyclic phosphate to form inositol 1-phosphate. This is Annexin A3 (ANXA3) from Bos taurus (Bovine).